The primary structure comprises 78 residues: Broad mercury transporter MerE (78 aa).

The next 2 helical transmembrane spans lie at 19–39 (LWGA…AAVL) and 47–67 (FLGE…VLAV).

It is found in the cell inner membrane. Broad mercury transporter that mediates the transport of both CH(3)Hg(I) and Hg(II) across the membrane. In Shigella flexneri, this protein is Broad mercury transporter MerE.